A 344-amino-acid polypeptide reads, in one-letter code: uncharacterized protein (344 aa).

Belongs to the glycosyltransferase 2 family.

May be involved in the production of the exopolysaccharide (EPS) component of the extracellular matrix during biofilm formation. EPS is responsible for the adhesion of chains of cells into bundles. This is an uncharacterized protein from Bacillus subtilis (strain 168).